Reading from the N-terminus, the 98-residue chain is uncharacterized protein (98 aa).

The chain crosses the membrane as a helical span at residues 10–30; it reads LYGFFAVTGVLIASFIIGEIV.

The protein localises to the host membrane. This is an uncharacterized protein from Saccharolobus islandicus (Sulfolobus islandicus).